A 114-amino-acid polypeptide reads, in one-letter code: Histone H3-5 (114 aa).

The disordered stretch occupies residues 1 to 29; that stretch reads NTGAKAPRKQLANKAARKSTNVNAVSGVK.

Belongs to the histone H3 family. In terms of assembly, the nucleosome is a histone octamer containing two molecules each of H2A, H2B, H3 and H4 assembled in one H3-H4 heterotetramer and two H2A-H2B heterodimers. The octamer wraps approximately 147 bp of DNA.

It localises to the nucleus. The protein resides in the chromosome. Its function is as follows. Core component of nucleosome. Nucleosomes wrap and compact DNA into chromatin, limiting DNA accessibility to the cellular machineries which require DNA as a template. Histones thereby play a central role in transcription regulation, DNA repair, DNA replication and chromosomal stability. DNA accessibility is regulated via a complex set of post-translational modifications of histones, also called histone code, and nucleosome remodeling. The polypeptide is Histone H3-5 (H3-5) (Stylonychia lemnae (Ciliate)).